The sequence spans 237 residues: Sugar fermentation stimulation protein homolog (237 aa).

Belongs to the SfsA family.

This chain is Sugar fermentation stimulation protein homolog, found in Actinobacillus pleuropneumoniae serotype 5b (strain L20).